The sequence spans 535 residues: CTP synthase (535 aa).

Residues 1–267 are amidoligase domain; sequence MTKYIFVTGG…DQIVCDHLKL (267 aa). CTP is bound at residue Ser13. Residue Ser13 participates in UTP binding. 14-19 serves as a coordination point for ATP; it reads SLGKGI. Tyr54 contributes to the L-glutamine binding site. Asp71 is an ATP binding site. Asp71 and Glu141 together coordinate Mg(2+). Residues 148 to 150, 188 to 193, and Lys224 each bind CTP; these read DIE and KTKPTQ. UTP-binding positions include 188–193 and Lys224; that span reads KTKPTQ. An ATP-binding site is contributed by 240-242; the sequence is RDA. One can recognise a Glutamine amidotransferase type-1 domain in the interval 292-534; it reads KIALVGKYVE…VSASITNKES (243 aa). Gly354 contacts L-glutamine. The active-site Nucleophile; for glutamine hydrolysis is Cys381. Residues 382-385, Glu405, and Arg462 contribute to the L-glutamine site; that span reads LGMQ. Active-site residues include His507 and Glu509.

Belongs to the CTP synthase family. In terms of assembly, homotetramer.

It catalyses the reaction UTP + L-glutamine + ATP + H2O = CTP + L-glutamate + ADP + phosphate + 2 H(+). It carries out the reaction L-glutamine + H2O = L-glutamate + NH4(+). The enzyme catalyses UTP + NH4(+) + ATP = CTP + ADP + phosphate + 2 H(+). It functions in the pathway pyrimidine metabolism; CTP biosynthesis via de novo pathway; CTP from UDP: step 2/2. With respect to regulation, allosterically activated by GTP, when glutamine is the substrate; GTP has no effect on the reaction when ammonia is the substrate. The allosteric effector GTP functions by stabilizing the protein conformation that binds the tetrahedral intermediate(s) formed during glutamine hydrolysis. Inhibited by the product CTP, via allosteric rather than competitive inhibition. Functionally, catalyzes the ATP-dependent amination of UTP to CTP with either L-glutamine or ammonia as the source of nitrogen. Regulates intracellular CTP levels through interactions with the four ribonucleotide triphosphates. This Bacillus mycoides (strain KBAB4) (Bacillus weihenstephanensis) protein is CTP synthase.